A 385-amino-acid polypeptide reads, in one-letter code: MGPLEAIGEENQTDEMKMELFTKLYLPRYTTPVSELALDPKPELKDSTTLVEVQIILIFAYCSIILLGVIGNSLVIHVIIKFKSMRTVTNFFIANLAVADLLVNTLCLPFTLVYTLLGEWKLGPVLCHLVPYAQALAVHVSTVTLTVIALDRHRCIVYHLESKISKRISFLIIGVAWAVSALLASPLAIFREYSLIEIIPDFKIVVCSEKWPGEGQLNYGTIYSVSMLLIQYVLPLAIISYAYTRIWTKLKNHVSPGAGNDHYHHRRQKTTKMLVCVVVVFAVSWLPFHAFQLVSDIDSQVLDLKEYKLIYTVFHVIAMCSTFANPLLYGWMNNNYRTAFLTAFQCEQRLDSIHPEVSAAFKARKKLEAKKSQFPGDSFTQPTNV.

Topologically, residues 1-54 (MGPLEAIGEENQTDEMKMELFTKLYLPRYTTPVSELALDPKPELKDSTTLVEVQ) are extracellular. N11 carries N-linked (GlcNAc...) asparagine glycosylation. A helical membrane pass occupies residues 55–75 (IILIFAYCSIILLGVIGNSLV). The Cytoplasmic segment spans residues 76 to 90 (IHVIIKFKSMRTVTN). Residues 91–111 (FFIANLAVADLLVNTLCLPFT) form a helical membrane-spanning segment. Residues 112–128 (LVYTLLGEWKLGPVLCH) lie on the Extracellular side of the membrane. A disulfide bridge connects residues C127 and C207. The helical transmembrane segment at 129-149 (LVPYAQALAVHVSTVTLTVIA) threads the bilayer. Over 150–169 (LDRHRCIVYHLESKISKRIS) the chain is Cytoplasmic. The helical transmembrane segment at 170 to 190 (FLIIGVAWAVSALLASPLAIF) threads the bilayer. Topologically, residues 191 to 221 (REYSLIEIIPDFKIVVCSEKWPGEGQLNYGT) are extracellular. A helical membrane pass occupies residues 222–242 (IYSVSMLLIQYVLPLAIISYA). The Cytoplasmic segment spans residues 243–273 (YTRIWTKLKNHVSPGAGNDHYHHRRQKTTKM). A helical transmembrane segment spans residues 274–294 (LVCVVVVFAVSWLPFHAFQLV). Residues 295-308 (SDIDSQVLDLKEYK) are Extracellular-facing. Residues 309–329 (LIYTVFHVIAMCSTFANPLLY) form a helical membrane-spanning segment. Topologically, residues 330–385 (GWMNNNYRTAFLTAFQCEQRLDSIHPEVSAAFKARKKLEAKKSQFPGDSFTQPTNV) are cytoplasmic. Residue C346 is the site of S-palmitoyl cysteine attachment.

The protein belongs to the G-protein coupled receptor 1 family.

The protein localises to the cell membrane. In terms of biological role, receptor for neuropeptide Y and peptide YY. The sequence is that of Neuropeptide Y receptor type 2 (NPY2R) from Gallus gallus (Chicken).